The following is a 646-amino-acid chain: Macrolide export ATP-binding/permease protein MacB (646 aa).

The region spanning 5-243 (IELKGVSRTY…TLPKTNRIRQ (239 aa)) is the ABC transporter domain. 41–48 (GASGSGKS) is a binding site for ATP. 4 consecutive transmembrane segments (helical) span residues 272–292 (TLTM…VALG), 518–538 (FSIL…IGVM), 570–590 (IIEA…LSYI), and 611–631 (AAVA…YLPA).

The protein belongs to the ABC transporter superfamily. Macrolide exporter (TC 3.A.1.122) family. As to quaternary structure, homodimer. Part of the tripartite efflux system MacAB-TolC, which is composed of an inner membrane transporter, MacB, a periplasmic membrane fusion protein, MacA, and an outer membrane component, TolC. The complex forms a large protein conduit and can translocate molecules across both the inner and outer membranes. Interacts with MacA.

The protein localises to the cell inner membrane. Part of the tripartite efflux system MacAB-TolC. MacB is a non-canonical ABC transporter that contains transmembrane domains (TMD), which form a pore in the inner membrane, and an ATP-binding domain (NBD), which is responsible for energy generation. Confers resistance against macrolides. The chain is Macrolide export ATP-binding/permease protein MacB from Escherichia coli.